A 1321-amino-acid polypeptide reads, in one-letter code: MSLVFAINGQRFELELSSVDPSTTLLEFLRYQTSFKSVKLSCGEGGCGACVVLLSKFDPVLQKVEDFTVSSCLTLLCSVNHCNITTSEGLGNSRDGFHPIHKRLSGFHASQCGFCTPGMSVSLFSALLDADKSQYSDLTVVEAEKAVSGNLCRCTGYRPIVDACKSFASDVDIEDLGLNSFCRKGDKDSSSLTRFDSEKRICTFPEFLKDEIKSVDSGMYRWCSPASVEELSSLLEACKANSNTVSMKLVAGNTSMGYYKDEREQNYDKYIDITRIPHLKEIRENQNGVEIGSVVTISKVIAALKEIRVSPGVEKIFGKLATHMEMIAARFIRNFGSIGGNLVMAQRKQFPSDMATILLAAGAFVNIMSSSRGLEKLTLEEFLERSPLEAHDLVLSIEIPFWHSETNSELFFETYRAAPRPHGSALAYLNAAFLAEVKDTMVVNCRLAFGAYGTKHAIRCKEIEEFLSGKVITDKVLYEAITLLGNVVVPEDGTSNPAYRSSLAPGFLFKFLHTLMTHPTTDKPSNGYHLDPPKPLPMLSSSQNVPINNEYNPVGQPVTKVGASLQASGEAVYVDDIPSPTNCLYGAFIYSKKPFARIKGIHFKDDLVPTGVVAVISRKDVPKGGKNIGMKIGLGSDQLFAEDFTTSVGECIAFVVADTQRHADAAVNLAVVEYETEDLEPPILSVEDAVKKSSLFDIIPFLYPQQVGDTSKGMAEADHQILSSEIRLGSQYVFYMETQTALAVGDEDNCIVVYSSTQTPQYVQSSVAACLGIPENNIRVITRRVGGGFGGKSVKSMPVATACALAAKKLQRPVRTYVNRKTDMIMTGGRHPMKITYSVGFKSTGKITALELEILIDAGASYGFSMFIPSNLIGSLKKYNWGALSFDIKLCKTNLLSRAIMRSPGDVQGTYIAEAIIENIASSLSLEVDTIRKINLHTHESLALFYKDGAGEPHEYTLSSMWDKVGVSSKFEERVSVVREFNESNMWRKRGISRVPIIYEVLLFATPGRVSVLSDGTIVVEIGGIELGQGLWTKVKQMTSYALGMLQCDGTEELLEKIRVIQSDSLSMVQGNFTGGSTTSEGSCAAVRLCCETLVERLKPLMERSDGPITWNELISQAYAQSVNLSASDLYTPKDTPMQYLNYGTAVSEVEVDLVTGQTTVLQTDILYDCGKSLNPAVDLGQIEGSFVQGLGFFMLEEYIEDPEGLLLTDSTWTYKIPTVDTIPKQFNVEILNGGCHEKRVLSSKASGEPPLLLAASVHCATRQAVKEARKQLCMWKGENGSSGSAFQLPVPATMPVVKELCGLDIIESYLEWKLHDNSNL.

Residues 1–90 (MSLVFAINGQ…HCNITTSEGL (90 aa)) enclose the 2Fe-2S ferredoxin-type domain. [2Fe-2S] cluster is bound by residues Cys42, Cys47, and Cys50. An FAD-binding PCMH-type domain is found at 215 to 404 (VDSGMYRWCS…LSIEIPFWHS (190 aa)).

The protein belongs to the xanthine dehydrogenase family. As to quaternary structure, aldehyde oxidases (AO) are homodimers and heterodimers of AO subunits. AO-beta is a AAO1-AAO2 heterodimer; AO-gamma is a AAO2 homodimer. AAO2 also forms a dimer with AAO3. It depends on [2Fe-2S] cluster as a cofactor. Requires FAD as cofactor. Mo-molybdopterin serves as cofactor. As to expression, weakly expressed in roots, leaves and seedlings. In seedlings, mostly expressed in lower part of hypocotyls. Detectable in seeds and mature siliques at low levels.

Its subcellular location is the cytoplasm. It carries out the reaction indole-3-acetaldehyde + O2 + H2O = (indol-3-yl)acetate + H2O2 + H(+). Its activity is regulated as follows. Strongly inhibited by iodoacetate, potassium cyanide (KCN), 2-mercaptoethanol, dithiothreitol (DTT), p-chloromercuribenzoate, menadione and estradiol. Weakly inhibited by 4'-(9-acridinylamino)methanesulfon-m-anisidine (mAMSA) and tritonX-100. Not affected by allopurinol. Functionally, in higher plant aldehyde oxidases (AO) appear to be homo- and heterodimeric assemblies of AO subunits with probably different physiological functions. In vitro, AO-gamma uses heptaldehyde, benzaldehyde, naphthaldehyde and cinnamaldehyde as substrates; AO-beta uses indole-3-acetaldehyde (IAAld), indole-3-aldehyde (IAld) and naphtaldehyde; the AAO2-AAO3 dimer uses abscisic aldehyde. This chain is Indole-3-acetaldehyde oxidase (AAO2), found in Arabidopsis thaliana (Mouse-ear cress).